A 93-amino-acid chain; its full sequence is Phosphoribosyl-ATP pyrophosphatase (93 aa).

Belongs to the PRA-PH family.

Its subcellular location is the cytoplasm. The catalysed reaction is 1-(5-phospho-beta-D-ribosyl)-ATP + H2O = 1-(5-phospho-beta-D-ribosyl)-5'-AMP + diphosphate + H(+). Its pathway is amino-acid biosynthesis; L-histidine biosynthesis; L-histidine from 5-phospho-alpha-D-ribose 1-diphosphate: step 2/9. In Mycobacterium avium (strain 104), this protein is Phosphoribosyl-ATP pyrophosphatase.